The following is a 449-amino-acid chain: GTPase Der (449 aa).

EngA-type G domains lie at 3–167 (SIVA…PDEP) and 175–350 (TNIA…EQYS). Residues 9 to 16 (GRPNVGKS), 56 to 60 (DTGGF), 119 to 122 (NKVD), 181 to 188 (GRPNVGKS), 228 to 232 (DTAGI), and 293 to 296 (NKWD) each bind GTP. The KH-like domain occupies 351 to 435 (RRVTTSELNR…PFRLLFRGRE (85 aa)).

The protein belongs to the TRAFAC class TrmE-Era-EngA-EngB-Septin-like GTPase superfamily. EngA (Der) GTPase family. Associates with the 50S ribosomal subunit.

In terms of biological role, GTPase that plays an essential role in the late steps of ribosome biogenesis. The chain is GTPase Der from Trichlorobacter lovleyi (strain ATCC BAA-1151 / DSM 17278 / SZ) (Geobacter lovleyi).